The chain runs to 474 residues: Mercuric reductase (474 aa).

FAD is bound by residues Ala19, Gly39, and Thr44. Cysteines 45 and 50 form a disulfide. FAD is bound by residues Lys54, Ala119, Asp315, and Val323. 2 residues coordinate Hg(2+): Cys471 and Cys472.

Belongs to the class-I pyridine nucleotide-disulfide oxidoreductase family. In terms of assembly, homodimer. Requires FAD as cofactor.

The enzyme catalyses Hg + NADP(+) + H(+) = Hg(2+) + NADPH. Resistance to Hg(2+) in bacteria appears to be governed by a specialized system which includes mercuric reductase. MerA protein is responsible for volatilizing mercury as Hg(0). This is Mercuric reductase (merA) from Streptomyces lividans.